Consider the following 337-residue polypeptide: GTP 3',8-cyclase (337 aa).

Residues 18–242 enclose the Radical SAM core domain; the sequence is NFGRRFHYLR…DKADILDGPA (225 aa). R27 lines the GTP pocket. The [4Fe-4S] cluster site is built by C34 and C38. Y40 contacts S-adenosyl-L-methionine. C41 is a [4Fe-4S] cluster binding site. Residue R76 coordinates GTP. Residue G80 participates in S-adenosyl-L-methionine binding. A GTP-binding site is contributed by T107. An S-adenosyl-L-methionine-binding site is contributed by S131. GTP is bound at residue K168. M202 serves as a coordination point for S-adenosyl-L-methionine. [4Fe-4S] cluster-binding residues include C265 and C268. GTP is bound at residue 270-272; the sequence is RLR. C282 lines the [4Fe-4S] cluster pocket.

This sequence belongs to the radical SAM superfamily. MoaA family. As to quaternary structure, monomer and homodimer. Requires [4Fe-4S] cluster as cofactor.

It carries out the reaction GTP + AH2 + S-adenosyl-L-methionine = (8S)-3',8-cyclo-7,8-dihydroguanosine 5'-triphosphate + 5'-deoxyadenosine + L-methionine + A + H(+). The protein operates within cofactor biosynthesis; molybdopterin biosynthesis. Its function is as follows. Catalyzes the cyclization of GTP to (8S)-3',8-cyclo-7,8-dihydroguanosine 5'-triphosphate. This Shewanella denitrificans (strain OS217 / ATCC BAA-1090 / DSM 15013) protein is GTP 3',8-cyclase.